The primary structure comprises 163 residues: MAITGSAAPSWPRLLHAEGPPSVICIRLLVGLVFLSEGIQKFMYPDQLGPGRFERIGIPAATFFADLDGVVEIVCGTLVLLGLLTRVAAVPLLIDMVGAIVLTKLRALQPGGFLGVEGFWGMAHAARTDLSMLLGLIFLLWSGPGRWSLDRRLSKRATACGAR.

4 helical membrane-spanning segments follow: residues 19 to 39, 63 to 83, 87 to 107, and 119 to 139; these read GPPSVICIRLLVGLVFLSEGI, FFADLDGVVEIVCGTLVLLGL, VAAVPLLIDMVGAIVLTKLRA, and FWGMAHAARTDLSMLLGLIFL.

The protein belongs to the DoxX family.

The protein localises to the cell membrane. This is an uncharacterized protein from Mycobacterium tuberculosis (strain ATCC 25618 / H37Rv).